Consider the following 469-residue polypeptide: Tubulin gamma-1 chain (469 aa).

142–148 contacts GTP; it reads AGGTGSG.

The protein belongs to the tubulin family.

It localises to the cytoplasm. The protein localises to the cytoskeleton. Its subcellular location is the microtubule organizing center. Functionally, tubulin is the major constituent of microtubules. The gamma chain is found at microtubule organizing centers (MTOC) such as the spindle poles, suggesting that it is involved in the minus-end nucleation of microtubule assembly. This Zea mays (Maize) protein is Tubulin gamma-1 chain (TUBG1).